The sequence spans 101 residues: Small ribosomal subunit protein uS14 (101 aa).

Belongs to the universal ribosomal protein uS14 family. In terms of assembly, part of the 30S ribosomal subunit. Contacts proteins S3 and S10.

Binds 16S rRNA, required for the assembly of 30S particles and may also be responsible for determining the conformation of the 16S rRNA at the A site. In Shewanella woodyi (strain ATCC 51908 / MS32), this protein is Small ribosomal subunit protein uS14.